A 341-amino-acid chain; its full sequence is ATP synthase subunit a 2 (341 aa).

An N-terminal signal peptide occupies residues Met-1–Ser-33. The next 6 helical transmembrane spans lie at Val-112 to Ala-132, Leu-173 to Pro-193, Gly-195 to Ile-215, Trp-242 to Val-262, Ile-273 to Ala-293, and Ile-307 to Leu-327.

Belongs to the ATPase A chain family. In terms of assembly, F-type ATPases have 2 components, CF(1) - the catalytic core - and CF(0) - the membrane proton channel. CF(1) has five subunits: alpha(3), beta(3), gamma(1), delta(1), epsilon(1). CF(0) has four main subunits: a, b, b' and c.

The protein resides in the cell inner membrane. In terms of biological role, key component of the proton channel; it plays a direct role in the translocation of protons across the membrane. The polypeptide is ATP synthase subunit a 2 (Chlorobium luteolum (strain DSM 273 / BCRC 81028 / 2530) (Pelodictyon luteolum)).